The sequence spans 117 residues: Small ribosomal subunit protein uS17 (117 aa).

The disordered stretch occupies residues 1-42 (MMAEAKKAAPKKAATAASKDADAKGPKHTPPNPKVRGRRKTR).

It belongs to the universal ribosomal protein uS17 family. As to quaternary structure, part of the 30S ribosomal subunit.

Its function is as follows. One of the primary rRNA binding proteins, it binds specifically to the 5'-end of 16S ribosomal RNA. This is Small ribosomal subunit protein uS17 from Mycolicibacterium paratuberculosis (strain ATCC BAA-968 / K-10) (Mycobacterium paratuberculosis).